The primary structure comprises 392 residues: Potassium/proton antiporter CemA (392 aa).

4 consecutive transmembrane segments (helical) span residues 174–194 (FLASLIWIPWIVSWFLRVWWL), 269–289 (SLANLGSDILACLILLAMLSL), 316–336 (FLILVTDVFVGFHSTHGWEVI), and 352–372 (FIFMFVATFPVLLDTVFKYWI).

Belongs to the CemA family.

It localises to the plastid. Its subcellular location is the chloroplast inner membrane. It carries out the reaction K(+)(in) + H(+)(out) = K(+)(out) + H(+)(in). Its function is as follows. Contributes to K(+)/H(+) antiport activity by supporting proton efflux to control proton extrusion and homeostasis in chloroplasts in a light-dependent manner to modulate photosynthesis. Prevents excessive induction of non-photochemical quenching (NPQ) under continuous-light conditions. Indirectly promotes efficient inorganic carbon uptake into chloroplasts. This chain is Potassium/proton antiporter CemA, found in Nephroselmis olivacea (Green alga).